A 275-amino-acid polypeptide reads, in one-letter code: Nurim (275 aa).

Topologically, residues 1-4 (MASV) are nuclear. A helical membrane pass occupies residues 5–32 (TFRDGFLCVSALITFVFVFVTGADFVRF). The Perinuclear space segment spans residues 33–63 (VSFRAINHNLSGAAPLCRDSVPWSVALRDGV). Residues 64–85 (VQKAVAVDVLLLVVFSLQHSLL) traverse the membrane as a helical segment. Over 86 to 102 (AWTPVKRVCQSVFGVLS) the chain is Nuclear. The chain crosses the membrane as a helical span at residues 103 to 119 (RSVYCFTTAAALQILMH). Residues 120–138 (YWRPVTSAPCLWSVSSAPW) are Perinuclear space-facing. A helical transmembrane segment spans residues 139 to 169 (EIWFPLICFIVHFLCWAIICSILLIFDYPEL). Topologically, residues 170-196 (LGIKQVYYECLGLGDPLLLKSERAQRL) are nuclear. The chain crosses the membrane as a helical span at residues 197-215 (YSHLRHPVCVELLTVLWLL). Residues 216–221 (PSFPLD) lie on the Perinuclear space side of the membrane. A helical membrane pass occupies residues 222–239 (RLLLAVFLTVYLILAHSL). At 240-275 (DKQDCAYLRHQLRNKLQLFSTPLEGSEQTNDNNKLE) the chain is on the nuclear side.

Belongs to the nurim family.

It is found in the nucleus inner membrane. This Danio rerio (Zebrafish) protein is Nurim (nrm).